The chain runs to 213 residues: Virulence factor 1 (213 aa).

Its subcellular location is the host mitochondrion. In terms of biological role, plays a role in antagonizing the host innate immune response. The chain is Virulence factor 1 from Norovirus (isolate Mouse/NoV/United States/MNV1/2002/GV) (MNV-1).